The sequence spans 390 residues: MLSRKGIIPEEYVLTRLAEDPTEPRYRARERRARFVSKKGNCNVAHKNIREQGRFLQDVFTTLVDLKWPHTLLIFTMSFLCSWLLFAMVWWLIAFAHGDLAPGEGTTVPCVTSIHSFSSAFLFSIEVQVTIGFGGRMVTEECPLAILILIVQNIVGLMINAIMLGCIFMKTSQAHRRAETLIFSKHAVIALRHGRLCFMLRVGDLRKSMIISATIHMQVVRKTTSPEGEVVPLHQVDIPMENGVGGNSIFLVAPLIIYHVIDANSPLYDLGPSDLHHHQDLEIIVILEGVVETTGITTQARTSYLADEILWGHRFVPIVAEEDGRYSVDYSKFGNTIKVPTPLCTAHQLDEDHSLLDALTLASTRGPLRKRSVPVAKAKPRFSISPDSLS.

The Cytoplasmic segment spans residues 1–65 (MLSRKGIIPE…LQDVFTTLVD (65 aa)). Residues N48 and R50 each coordinate ATP. Residues 66–92 (LKWPHTLLIFTMSFLCSWLLFAMVWWL) traverse the membrane as a helical segment. Topologically, residues 93–116 (IAFAHGDLAPGEGTTVPCVTSIHS) are extracellular. C110 and C142 are oxidised to a cystine. Residues 117–133 (FSSAFLFSIEVQVTIGF) constitute an intramembrane region (discontinuously helical; Pore-forming). K(+)-binding residues include T130 and F133. The Selectivity filter motif lies at 130–135 (TIGFGG). Over 134-142 (GGRMVTEEC) the chain is Extracellular. A helical transmembrane segment spans residues 143–171 (PLAILILIVQNIVGLMINAIMLGCIFMKT). Residues 172 to 390 (SQAHRRAETL…RFSISPDSLS (219 aa)) are Cytoplasmic-facing. Residue R176 participates in a 1,2-diacyl-sn-glycero-3-phospho-(1D-myo-inositol-4,5-bisphosphate) binding. Residue Y330 coordinates ATP. The residue at position 341 (T341) is a Phosphothreonine; by MAPK1. At S385 the chain carries Phosphoserine; by MAPK1.

It belongs to the inward rectifier-type potassium channel (TC 1.A.2.1) family. KCNJ11 subfamily. In terms of assembly, homotetramer; the homotetramer binds four ATP molecules (one ATP per subunit). Forms an heterooctamer with ABCC8/SUR1; one KCNJ11 homotetramer interacts with four ABCC8/SUR1 molecules. Interacts with ABCC9/SUR2. Post-translationally, phosphorylation by MAPK1 results in changes in channel gating that destabilize the closed states and reduce the ATP sensitivity.

Its subcellular location is the membrane. The catalysed reaction is K(+)(in) = K(+)(out). Its activity is regulated as follows. KATP channels are regulated by cytoplasmic ATP/ADP ratios; ATP inhibits the channel by closing the pore, while ADP activates the channel. Activated by phosphatidylinositol 4,5-biphosphate (PtdIns(4,5)P2). In terms of biological role, inward rectifier potassium channel that forms the pore of ATP-sensitive potassium channels (KATP), regulating potassium permeability as a function of cytoplasmic ATP and ADP concentrations in many different cells. Inward rectifier potassium channels are characterized by a greater tendency to allow potassium to flow into the cell rather than out of it. Their voltage dependence is regulated by the concentration of extracellular potassium; as external potassium is raised, the voltage range of the channel opening shifts to more positive voltages. The inward rectification is mainly due to the blockage of outward current by internal magnesium. Can be blocked by extracellular barium. In pancreatic cells, it forms KATP channels with ABCC8/SUR1. Can form cardiac and smooth muscle-type KATP channels with ABCC9. This Cavia porcellus (Guinea pig) protein is ATP-sensitive inward rectifier potassium channel 11 (KCNJ11).